A 208-amino-acid chain; its full sequence is Small ribosomal subunit protein bS6 (208 aa).

Disordered regions lie at residues 121 to 143 (SENN…KPRL) and 185 to 208 (NQQT…GAKP). Residues 185–195 (NQQTSQANNNQ) show a composition bias toward low complexity.

It belongs to the bacterial ribosomal protein bS6 family.

Binds together with bS18 to 16S ribosomal RNA. This Mycoplasma genitalium (strain ATCC 33530 / DSM 19775 / NCTC 10195 / G37) (Mycoplasmoides genitalium) protein is Small ribosomal subunit protein bS6 (rpsF).